The following is a 796-amino-acid chain: MEESETKGRISQETDKACVSVERIGSTLLSSFVKKGKEVSNKRNSKQNKRKAEEELCSKSRTKKYSRGWVRCEEMEEEKVKKTRKRKSKRQQKDNKVEVDDSLRLQRRTRYLLIKMKMQQNLIDAYATEGWKGQSREKIRPDKELERARKEILNCKLGLRDAIRQLDLLSSVGSMEEKVIASDGSIHHDHIFCAECNSREAFPDNDIILCDGTCNRAFHQKCLDPPLETESIPPGDQGWFCKFCDCKIEIIDTMNAQIGTHFPVDSNWQDIFNEEASLPIGSEATVNNEADWPSDDSKDDDYDPEMRENGGGNSSNVSGDGGGDNDEESISTSLSLSSDGVALSTGSWEGHRLSNMVEQCETSNEETVCGPRQRRTVDYTQLYYEMFGKDAVLQEQGSEDEDWGPNDRRKRKRESDAGSTLVTMCESSKKDQDVVETLEQSERDSVSVENKGGRRRMFRLPRNAVEKLRQVFAETELPSKAVRDRLAKELSLDPEKVNKWFKNTRYMALRNRKTESVKQPGDSKTVSGGDSGPEAVMENNTETNEVQDTLDDTVPPGFDATNQNILSPCNNNQEEFQQENVSFPSPTDESQQYLEQNDSSFVLVPHEKQSSEISLKTAVEENETESKMMKEPHEELSSEMSLKTAAEEKETESKMIEEPHEELSREMSLKTAVEEKETESKMMEEPHDELNSEMSLSTAVEEKETGSKMTEESHEELSNEMSLEEKETGRKMTEEEELEAVMEMLCRTENKLLDVTQRLDRFKTPKGRKKLGNSSSPLLEEDSVVYVPIAEIKEKR.

Disordered stretches follow at residues 34-57 (KKGK…EELC) and 80-99 (VKKT…KVEV). Residues 81–90 (KKTRKRKSKR) show a composition bias toward basic residues. Residues 190–247 (HIFCAECNSREAFPDNDIILCDGTCNRAFHQKCLDPPLETESIPPGDQGWFCKFCDCK) form a PHD-type zinc finger. Disordered regions lie at residues 282 to 347 (SEAT…STGS), 393 to 422 (LQEQ…STLV), and 511 to 736 (NRKT…TEEE). The segment covering 292-303 (WPSDDSKDDDYD) has biased composition (acidic residues). The homeobox DNA-binding region spans 452–511 (GGRRRMFRLPRNAVEKLRQVFAETELPSKAVRDRLAKELSLDPEKVNKWFKNTRYMALRN). Polar residues-rich tracts occupy residues 538–547 (ENNTETNEVQ) and 560–569 (ATNQNILSPC). The span at 570-580 (NNNQEEFQQEN) shows a compositional bias: low complexity. Residues 581–600 (VSFPSPTDESQQYLEQNDSS) show a composition bias toward polar residues. 4 tandem repeats follow at residues 605–631 (PHEK…MMKE), 632–658 (PHEE…MIEE), 659–685 (PHEE…MMEE), and 686–712 (PHDE…MTEE). The segment at 605 to 735 (PHEKQSSEIS…KETGRKMTEE (131 aa)) is 5 X 27 AA tandem repeats. Composition is skewed to basic and acidic residues over residues 624-636 (TESK…HEEL), 645-690 (AAEE…HDEL), and 700-733 (VEEK…RKMT). The stretch at 713–735 (SHEELSNEMSLEEKETGRKMTEE) is one 5; truncated repeat. Residues 738 to 759 (LEAVMEMLCRTENKLLDVTQRL) form a leucine-zipper region.

Belongs to the PHD-associated homeobox family.

The protein resides in the nucleus. Specifically binds to the fungal elicitor-responsive DNA element, 5'-CTAATTGTTTA-3', of the gene PR2 promoter. The chain is Pathogenesis-related homeodomain protein (PRH) from Arabidopsis thaliana (Mouse-ear cress).